Consider the following 364-residue polypeptide: Anthranilate phosphoribosyltransferase 1 (364 aa).

5-phospho-alpha-D-ribose 1-diphosphate is bound by residues G102, 105 to 106 (GD), T110, 112 to 115 (NIST), 130 to 138 (KHGNRSASS), and S142. Position 102 (G102) interacts with anthranilate. Position 114 (S114) interacts with Mg(2+). N133 is a binding site for anthranilate. Position 188 (R188) interacts with anthranilate. Residues D247 and E248 each contribute to the Mg(2+) site.

Belongs to the anthranilate phosphoribosyltransferase family. In terms of assembly, homodimer. Requires Mg(2+) as cofactor.

The catalysed reaction is N-(5-phospho-beta-D-ribosyl)anthranilate + diphosphate = 5-phospho-alpha-D-ribose 1-diphosphate + anthranilate. The protein operates within amino-acid biosynthesis; L-tryptophan biosynthesis; L-tryptophan from chorismate: step 2/5. Functionally, catalyzes the transfer of the phosphoribosyl group of 5-phosphorylribose-1-pyrophosphate (PRPP) to anthranilate to yield N-(5'-phosphoribosyl)-anthranilate (PRA). The polypeptide is Anthranilate phosphoribosyltransferase 1 (Nostoc sp. (strain PCC 7120 / SAG 25.82 / UTEX 2576)).